We begin with the raw amino-acid sequence, 1728 residues long: Lysophospholipase NTE1 (1728 aa).

The Cytoplasmic segment spans residues 1–44 (MDSSSIAHESDIVSTERNILPERFISNKQQGNYLEDGSGDGNGK). Residues 45–65 (AAEHWLLAAIFNFFWVISYFI) form a helical membrane-spanning segment. Over 66-97 (SGSTHIAFRSSWYIVSLLLLKFPKWIIVEANH) the chain is Lumenal. A helical transmembrane segment spans residues 98 to 118 (IHLTIPFSVLVVTLAIIFYVS). Over 119–1728 (YEFLKGRLLS…GFFLHRRNSI (1610 aa)) the chain is Cytoplasmic. Over residues 141–150 (SLNSKNSKSS) the composition is skewed to low complexity. Disordered stretches follow at residues 141-167 (SLNS…RRRR), 285-368 (RKKK…DEST), 406-436 (NDNV…LSTS), 454-488 (TEAS…VTTP), 596-660 (NLQK…TGSR), and 687-756 (ASPS…FTSF). Basic and acidic residues predominate over residues 153–162 (LHHDSKDSNT). Composition is skewed to polar residues over residues 293 to 303 (SRHGQYNNNSD) and 326 to 336 (MRSSSRNQNIP). Residues 345–367 (SSDEESDINDGDSESQSESDDES) show a composition bias toward acidic residues. 3 stretches are compositionally biased toward polar residues: residues 406–424 (NDNV…NYTN), 454–479 (TEAS…SKSI), and 599–609 (KGFQSPTSSRL). Residues 610-628 (TSNFNGNSNNQRTNSRNSQ) are compositionally biased toward low complexity. Polar residues-rich tracts occupy residues 642–657 (ELSQ…TPIT) and 729–756 (IYNN…FTSF). A nucleoside 3',5'-cyclic phosphate-binding positions include 854–987 (SPTL…LTSL) and 983–1121 (SLTS…VAKK). The interval 1034-1055 (PELEENSTDYPNDGEEKDSSRD) is disordered. Residues 1036–1049 (LEENSTDYPNDGEE) are compositionally biased toward acidic residues. One can recognise a PNPLA domain in the interval 1422–1586 (LVLGGGGARG…VDNLPVLEMK (165 aa)). Residues 1426–1431 (GGGARG) carry the GXGXXG motif. Positions 1453-1457 (GTSIG) match the GXSXG motif. S1455 serves as the catalytic Nucleophile. D1573 functions as the Proton acceptor in the catalytic mechanism. The DGA/G motif lies at 1573–1575 (DGG).

The protein belongs to the NTE family.

It is found in the endoplasmic reticulum membrane. It catalyses the reaction a 1-acyl-sn-glycero-3-phosphocholine + H2O = sn-glycerol 3-phosphocholine + a fatty acid + H(+). Inhibited by organophosphorus esters. Intracellular phospholipase B that catalyzes the double deacylation of phosphatidylcholine (PC) to glycerophosphocholine (GroPCho). Plays an important role in membrane lipid homeostasis. Responsible for the rapid PC turnover in response to inositol, elevated temperatures, or when choline is present in the growth medium. This Candida glabrata (strain ATCC 2001 / BCRC 20586 / JCM 3761 / NBRC 0622 / NRRL Y-65 / CBS 138) (Yeast) protein is Lysophospholipase NTE1 (NTE1).